Here is a 196-residue protein sequence, read N- to C-terminus: Small ribosomal subunit protein uS4c (196 aa).

Positions Leu-15–Arg-41 are disordered. Residues Met-89–Asn-150 form the S4 RNA-binding domain.

Belongs to the universal ribosomal protein uS4 family. Part of the 30S ribosomal subunit. Contacts protein S5. The interaction surface between S4 and S5 is involved in control of translational fidelity.

Its subcellular location is the plastid. The protein resides in the chloroplast. Functionally, one of the primary rRNA binding proteins, it binds directly to 16S rRNA where it nucleates assembly of the body of the 30S subunit. In terms of biological role, with S5 and S12 plays an important role in translational accuracy. This chain is Small ribosomal subunit protein uS4c (rps4), found in Narcissus odorus (Campernelle jonquil).